The primary structure comprises 294 residues: Protoheme IX farnesyltransferase (294 aa).

9 consecutive transmembrane segments (helical) span residues 25–45, 48–68, 92–112, 115–135, 141–161, 170–190, 216–236, 240–260, and 272–292; these read SLVLVTAAGGMWLAPGHMGAV, LVTLLATAGTVGAANALNCYW, AVALWFGISLAAVSLPALALG, VLTAALGLVALLSYVLAYTPL, AAMLVGGVPGALPPLMGWTAV, FSLFAIMFLWQMPHFIAIALF, VVLYLVALIPMTLLPFQLHIA, YLAAAVLLGLSFLGLGAWGFF, and FFFSLIYLTGLFAALALDRVP.

The protein belongs to the UbiA prenyltransferase family. Protoheme IX farnesyltransferase subfamily.

Its subcellular location is the cell inner membrane. It carries out the reaction heme b + (2E,6E)-farnesyl diphosphate + H2O = Fe(II)-heme o + diphosphate. Its pathway is porphyrin-containing compound metabolism; heme O biosynthesis; heme O from protoheme: step 1/1. Functionally, converts heme B (protoheme IX) to heme O by substitution of the vinyl group on carbon 2 of heme B porphyrin ring with a hydroxyethyl farnesyl side group. The protein is Protoheme IX farnesyltransferase of Myxococcus xanthus (strain DK1622).